The following is a 146-amino-acid chain: SMR1 protein (146 aa).

Positions 1–22 (MKSLYLIFGLWILLACFQSGEG) are cleaved as a signal peptide. Disordered regions lie at residues 23 to 43 (VRGP…TLPH) and 99 to 146 (TAPD…GGGK). Positions 109-139 (PPTQLHSTEQANTKTDAKISNTTATTQNSTD) are enriched in polar residues. Residues Asn-129 and Asn-136 are each glycosylated (N-linked (GlcNAc...) asparagine).

Several O-linked glycosylation sites might be present in the C-terminal part. As to expression, expressed predominantly in the acinar cells of the submandibular gland and to lesser extent in the prostate.

Its subcellular location is the secreted. Its function is as follows. Sialorphin may be involved in the modulation of mineral balance between at least four systems: kidney, bone, tooth and circulation. Submandibular gland peptide T is able to directly or indirectly down-regulate cardiovascular depression induced by septic shock (endotoxin stimuli), or anaphylactic challenge (nematode antigen sensitization). Functionally, sialorphin is an endogenous inhibitor of neprilysin. Inhibits the breakdown of Met-enkephalin and substance P in isolated tissue from the dorsal zone of the rat spinal cord. Has an analgesic effect when administered to rats by intravenous injection. The protein is SMR1 protein (Vcsa1) of Rattus norvegicus (Rat).